We begin with the raw amino-acid sequence, 131 residues long: Small ribosomal subunit protein uS8 (131 aa).

Positions 1–27 are disordered; sequence MSMTDPVADMLTRIRNGQRASKNEVSM.

Belongs to the universal ribosomal protein uS8 family. Part of the 30S ribosomal subunit. Contacts proteins S5 and S12.

Its function is as follows. One of the primary rRNA binding proteins, it binds directly to 16S rRNA central domain where it helps coordinate assembly of the platform of the 30S subunit. The polypeptide is Small ribosomal subunit protein uS8 (Thioalkalivibrio sulfidiphilus (strain HL-EbGR7)).